The sequence spans 485 residues: Ribulose bisphosphate carboxylase large chain (485 aa).

Positions 1–2 (MS) are excised as a propeptide. Residue Pro-3 is modified to N-acetylproline. Residue Lys-14 is modified to N6,N6,N6-trimethyllysine. Substrate is bound by residues Asn-123 and Thr-173. Lys-175 serves as the catalytic Proton acceptor. Residue Lys-177 participates in substrate binding. Residues Lys-201, Asp-203, and Glu-204 each contribute to the Mg(2+) site. Lys-201 is subject to N6-carboxylysine. The active-site Proton acceptor is His-294. Substrate is bound by residues Arg-295, His-327, and Ser-379.

Belongs to the RuBisCO large chain family. Type I subfamily. As to quaternary structure, heterohexadecamer of 8 large chains and 8 small chains; disulfide-linked. The disulfide link is formed within the large subunit homodimers. The cofactor is Mg(2+). In terms of processing, the disulfide bond which can form in the large chain dimeric partners within the hexadecamer appears to be associated with oxidative stress and protein turnover.

The protein resides in the plastid. Its subcellular location is the chloroplast. It carries out the reaction 2 (2R)-3-phosphoglycerate + 2 H(+) = D-ribulose 1,5-bisphosphate + CO2 + H2O. The enzyme catalyses D-ribulose 1,5-bisphosphate + O2 = 2-phosphoglycolate + (2R)-3-phosphoglycerate + 2 H(+). Functionally, ruBisCO catalyzes two reactions: the carboxylation of D-ribulose 1,5-bisphosphate, the primary event in carbon dioxide fixation, as well as the oxidative fragmentation of the pentose substrate in the photorespiration process. Both reactions occur simultaneously and in competition at the same active site. This is Ribulose bisphosphate carboxylase large chain from Flaveria pringlei.